The primary structure comprises 514 residues: Adenylosuccinate synthetase 1, chloroplastic (514 aa).

The N-terminal 73 residues, 1–73 (MAMAAAAAVA…AQAIERESVK (73 aa)), are a transit peptide targeting the chloroplast. GTP-binding positions include 100–106 (GDEGKGK) and 128–130 (GHT). Residue Asp-101 is the Proton acceptor of the active site. The Mg(2+) site is built by Asp-101 and Gly-128. Residues 101 to 104 (DEGK), 126 to 129 (NAGH), Thr-218, Arg-232, Gln-312, Thr-327, and Arg-391 each bind IMP. His-129 acts as the Proton donor in catalysis. Residue 387–393 (TTTGRPR) coordinates substrate. Residues Arg-393, 419 to 421 (KLD), and 502 to 504 (GVG) each bind GTP.

The protein belongs to the adenylosuccinate synthetase family. In terms of assembly, homodimer. Mg(2+) serves as cofactor.

It is found in the plastid. The protein resides in the chloroplast. The catalysed reaction is IMP + L-aspartate + GTP = N(6)-(1,2-dicarboxyethyl)-AMP + GDP + phosphate + 2 H(+). It participates in purine metabolism; AMP biosynthesis via de novo pathway; AMP from IMP: step 1/2. Functionally, plays an important role in the de novo pathway and in the salvage pathway of purine nucleotide biosynthesis. Catalyzes the first committed step in the biosynthesis of AMP from IMP. The chain is Adenylosuccinate synthetase 1, chloroplastic from Physcomitrium patens (Spreading-leaved earth moss).